The following is a 240-amino-acid chain: Pyridoxine 5'-phosphate synthase (240 aa).

Asn7 lines the 3-amino-2-oxopropyl phosphate pocket. Asp9–His10 provides a ligand contact to 1-deoxy-D-xylulose 5-phosphate. Residue Arg18 coordinates 3-amino-2-oxopropyl phosphate. His43 (proton acceptor) is an active-site residue. Positions 45 and 50 each coordinate 1-deoxy-D-xylulose 5-phosphate. Glu70 functions as the Proton acceptor in the catalytic mechanism. 1-deoxy-D-xylulose 5-phosphate is bound at residue Thr100. His191 functions as the Proton donor in the catalytic mechanism. 3-amino-2-oxopropyl phosphate is bound by residues Gly192 and Gly213–His214.

It belongs to the PNP synthase family. As to quaternary structure, homooctamer; tetramer of dimers.

The protein localises to the cytoplasm. The enzyme catalyses 3-amino-2-oxopropyl phosphate + 1-deoxy-D-xylulose 5-phosphate = pyridoxine 5'-phosphate + phosphate + 2 H2O + H(+). Its pathway is cofactor biosynthesis; pyridoxine 5'-phosphate biosynthesis; pyridoxine 5'-phosphate from D-erythrose 4-phosphate: step 5/5. Functionally, catalyzes the complicated ring closure reaction between the two acyclic compounds 1-deoxy-D-xylulose-5-phosphate (DXP) and 3-amino-2-oxopropyl phosphate (1-amino-acetone-3-phosphate or AAP) to form pyridoxine 5'-phosphate (PNP) and inorganic phosphate. This Microcystis aeruginosa (strain NIES-843 / IAM M-2473) protein is Pyridoxine 5'-phosphate synthase.